The primary structure comprises 595 residues: Putative lipase atg15 (595 aa).

At 1–20 (MKGLRGHNKKSFWGNTRLSD) the chain is on the cytoplasmic side. Residues 21–41 (LLWPVTLLPGLISAYQPVYLG) form a helical; Signal-anchor for type II membrane protein membrane-spanning segment. The Lumenal portion of the chain corresponds to 42-595 (SRQSSPFLPP…TTTGKHLGRF (554 aa)). N-linked (GlcNAc...) asparagine glycans are attached at residues asparagine 164, asparagine 199, asparagine 221, asparagine 279, and asparagine 303. The Charge relay system role is filled by serine 319. Asparagine 465 is a glycosylation site (N-linked (GlcNAc...) asparagine).

It belongs to the AB hydrolase superfamily. Lipase family. As to quaternary structure, binds to both phosphatidylinositol (PI) and phosphatidylinositol 3,5-bisphosphate (PIP2).

The protein localises to the endosome. It is found in the multivesicular body membrane. Its subcellular location is the prevacuolar compartment membrane. It catalyses the reaction a triacylglycerol + H2O = a diacylglycerol + a fatty acid + H(+). In terms of biological role, lipase which is essential for lysis of subvacuolar cytoplasm to vacuole targeted bodies and intravacuolar autophagic bodies. Involved in the lysis of intravacuolar multivesicular body (MVB) vesicles. The intravacuolar membrane disintegration by atg15 is critical to life span extension. This is Putative lipase atg15 (atg15) from Aspergillus niger (strain ATCC MYA-4892 / CBS 513.88 / FGSC A1513).